Consider the following 419-residue polypeptide: DNA ligase (419 aa).

The interval 1-120 (MLNQFPGQYS…ARQKRGAHTN (120 aa)) is NTD. Residues 121–317 (RGMIPPMLVK…NYHSAHLAKL (197 aa)) form an AD domain region. 4 residues coordinate ATP: Q149, K151, E203, and F232. The active-site N6-AMP-lysine intermediate is the K151. An a divalent metal cation-binding site is contributed by E203. Residue E291 participates in a divalent metal cation binding. Positions 294 and 316 each coordinate ATP. An OB domain region spans residues 318 to 419 (KPLLDAEFIL…REPINVLEII (102 aa)).

The protein belongs to the ATP-dependent DNA ligase family. A divalent metal cation serves as cofactor.

The protein localises to the virion. It carries out the reaction ATP + (deoxyribonucleotide)n-3'-hydroxyl + 5'-phospho-(deoxyribonucleotide)m = (deoxyribonucleotide)n+m + AMP + diphosphate.. Its function is as follows. Very low-fidelity DNA ligase that seals nicks in double-stranded DNA during DNA repair. Together with the viral repair DNA polymerase X, fills the single nucleotide gaps generated by the AP endonuclease. It is not essential for viral replication and recombination. Displays a very low adenylation activity towards DNA with 3'-dideoxy- or 3'-amino-terminated nicks compared to regular nick DNA. This is DNA ligase (LIG) from Ornithodoros (relapsing fever ticks).